Consider the following 1846-residue polypeptide: Unconventional myosin-Vb (1846 aa).

Positions 8-60 constitute a Myosin N-terminal SH3-like domain; that stretch reads SRYTRVWIPDPDEVWRSAELTKDYKDGDESLQLRLEDDTILDYPIDVQNNQVP. The segment at 21 to 40 is requires for interaction with LIMA1; the sequence is VWRSAELTKDYKDGDESLQL. Residues 69–763 form the Myosin motor domain; sequence VGENDLTALS…QVAYLEKLRA (695 aa). 163-170 lines the ATP pocket; it reads GESGAGKT. The segment at 599-629 is disordered; sequence VPATNTAKSRSSSKINVRSSRPLMKAPNKEH. Over residues 607 to 619 the composition is skewed to low complexity; sequence SRSSSKINVRSSR. The interval 641–663 is actin-binding; the sequence is LNLLMETLNATTPHYVRCIKPND. IQ domains are found at residues 767-788, 789-813, 814-837, 838-861, 862-884, and 885-914; these read REATIMIQKTVRGWLQRVKYRR, LRAATLTLQRFCRGYLARRLTEHLR, RTRAAIVFQKQYRMLKARRAYCRV, RRAAVIIQSYTRGHVCTQKLPPVL, TEHKATIIQKYARGWMARRHFQR, and QRDAAIVIQCAFRRLKARQALKALKIEARS. Coiled coils occupy residues 915 to 1272 and 1334 to 1450; these read AEHL…ADQR and LKQV…RHHE. Residues 1088–1122 form a disordered region; it reads RDEQQTPGHRKNPSNQSSLESDSNYPSISTSEIGD. A compositionally biased stretch (polar residues) spans 1100 to 1120; it reads PSNQSSLESDSNYPSISTSEI. Position 1444 is a phosphoserine (Ser-1444). Residues 1524-1801 enclose the Dilute domain; the sequence is SSTINGIKKV…IRTIQAQLQE (278 aa).

The protein belongs to the TRAFAC class myosin-kinesin ATPase superfamily. Myosin family. In terms of assembly, component of the CART complex, at least composed of ACTN4, HGS/HRS, MYO5B and TRIM3. Interacts with RAB11FIP2. Interacts with RAB11A and RAB8A. Found in a complex with CFTR and RAB11A. Interacts with NPC1L1. Interacts with LIMA1.

It localises to the cytoplasm. Its function is as follows. May be involved in vesicular trafficking via its association with the CART complex. The CART complex is necessary for efficient transferrin receptor recycling but not for EGFR degradation. Required in a complex with RAB11A and RAB11FIP2 for the transport of NPC1L1 to the plasma membrane. Together with RAB11A participates in CFTR trafficking to the plasma membrane and TF (transferrin) recycling in nonpolarized cells. Together with RAB11A and RAB8A participates in epithelial cell polarization. Together with RAB25 regulates transcytosis. Required for proper localization of bile salt export pump ABCB11 at the apical/canalicular plasma membrane of hepatocytes. In Rattus norvegicus (Rat), this protein is Unconventional myosin-Vb (Myo5b).